Reading from the N-terminus, the 572-residue chain is RNA polymerase sigma factor sigB (572 aa).

A chloroplast-targeting transit peptide spans 1-39 (MSSCLLPQFKCPPDSFSIHFRTSFCAPKHNKGSVFFQPQ). The tract at residues 215–249 (TRQTERKARRAKGLEKTASGIPSVKTGSSPKKKRL) is disordered. Positions 360 to 373 (DLVQEGCRGLVRGA) match the Polymerase core binding motif. A DNA-binding region (H-T-H motif) is located at residues 530–549 (LQEIGEMMGVSRERVRQIES).

It belongs to the sigma-70 factor family. In terms of tissue distribution, highly expressed in cotyledons, to a lesser extent in leaves, sepals and siliques, and barely expressed in roots. Present in seedlings.

It is found in the plastid. It localises to the chloroplast. Required for the transition of plastids into chloroplasts by coordinating nuclear and chloroplastic genomes under light conditions. Sigma factors are initiation factors that promote the attachment of plastid-encoded RNA polymerase (PEP) to specific initiation sites and are then released. Promotes the biosynthesis of plastid-encoded tRNAs (e.g. trnE-UUC and trnV-UAC). This Arabidopsis thaliana (Mouse-ear cress) protein is RNA polymerase sigma factor sigB (SIGB).